A 78-amino-acid polypeptide reads, in one-letter code: Magnetosome protein MamL (78 aa).

A signal peptide spans 1–22 (MVRVIGSLVFGGLILLLASSNA). Residues 23 to 38 (HMVETRFGPLIMLAPH) are Lumenal-facing. The helical transmembrane segment at 39–59 (FVVLGITFFLGFAIGIVLVFA) threads the bilayer. The Cytoplasmic portion of the chain corresponds to 60–78 (NVMKRRKHKLPGKNIVIKR).

This sequence belongs to the magnetosome MamL family.

The protein localises to the magnetosome membrane. Functionally, involved in magnetite crystal maturation, but not in magnetosome vesicle tubulation or formation. One of 7 genes (mamLQBIEMO) able to induce magnetosome membrane biogenesis; coexpression of mamLQRBIEMO in a deletion of the 17 gene mamAB operon restores magnetosome vesicle formation but not magnetite biosynthesis. The sequence is that of Magnetosome protein MamL from Magnetospirillum gryphiswaldense (strain DSM 6361 / JCM 21280 / NBRC 15271 / MSR-1).